The chain runs to 125 residues: METVFTEKAPKPVGPYSQAIKVGNTLYVSGQIPIDPRTNEIVKGDIKVQTRQVLDNIKEIVKAAGFSLSDVAMAFVFLKDMNMFNDFNSVYAEYFKDKPPARVTVEVSRLPKDALIEIAVICSKG.

It belongs to the RutC family.

This Sulfurisphaera tokodaii (strain DSM 16993 / JCM 10545 / NBRC 100140 / 7) (Sulfolobus tokodaii) protein is RutC family protein STK_08110.